The chain runs to 347 residues: S-adenosylmethionine:tRNA ribosyltransferase-isomerase (347 aa).

This sequence belongs to the QueA family. Monomer.

The protein resides in the cytoplasm. The catalysed reaction is 7-aminomethyl-7-carbaguanosine(34) in tRNA + S-adenosyl-L-methionine = epoxyqueuosine(34) in tRNA + adenine + L-methionine + 2 H(+). The protein operates within tRNA modification; tRNA-queuosine biosynthesis. Functionally, transfers and isomerizes the ribose moiety from AdoMet to the 7-aminomethyl group of 7-deazaguanine (preQ1-tRNA) to give epoxyqueuosine (oQ-tRNA). This chain is S-adenosylmethionine:tRNA ribosyltransferase-isomerase, found in Gluconobacter oxydans (strain 621H) (Gluconobacter suboxydans).